Consider the following 356-residue polypeptide: Thymidine kinase (356 aa).

A disordered region spans residues 1–29; that stretch reads MMDSRATYVPPKKISESNSNAEEDPTDCS. 61 to 68 is a binding site for ATP; the sequence is GCVGVGKT. Catalysis depends on glutamate 86, which acts as the Proton acceptor. Glutamine 122 serves as a coordination point for substrate. Arginine 208 serves as a coordination point for ATP. Arginine 214 contributes to the substrate binding site.

It belongs to the herpesviridae thymidine kinase family. In terms of assembly, homodimer.

It catalyses the reaction thymidine + ATP = dTMP + ADP + H(+). Its function is as follows. Catalyzes the transfer of the gamma-phospho group of ATP to thymidine to generate dTMP in the salvage pathway of pyrimidine synthesis. The dTMP serves as a substrate for DNA polymerase during viral DNA replication. Allows the virus to be reactivated and to grow in non-proliferative cells lacking a high concentration of phosphorylated nucleic acid precursors. The chain is Thymidine kinase from Elephas maximus (Indian elephant).